The chain runs to 640 residues: ATP-dependent rRNA helicase spb4 (640 aa).

Residues 14-42 (WDAVTPALSEWVLEAMSSMGFTRMTPVQA) carry the Q motif motif. The Helicase ATP-binding domain maps to 45-249 (IPLFMAHKDV…RVGLRNPVKV (205 aa)). 58–65 (AVTGSGKT) is a binding site for ATP. Positions 197–200 (DEAD) match the DEAD box motif. Positions 283–437 (ALKRIVSSVQ…SISFSDADAA (155 aa)) constitute a Helicase C-terminal domain. The stretch at 521–629 (AYKDKQREKR…VAKAAGAKAD (109 aa)) forms a coiled coil. 2 disordered regions span residues 531-593 (RKEL…EEEK) and 607-640 (RKKN…QGFD). Basic and acidic residues predominate over residues 577 to 593 (KSKQEKARWEKMTEEEK). A compositionally biased stretch (acidic residues) spans 630–640 (GDDEEEFQGFD).

It belongs to the DEAD box helicase family. DDX55/SPB4 subfamily. Component of pre-60S ribosomal complexes.

The protein resides in the nucleus. It is found in the nucleolus. It catalyses the reaction ATP + H2O = ADP + phosphate + H(+). Its function is as follows. ATP-binding RNA helicase involved in the biogenesis of 60S ribosomal subunits. Binds 90S pre-ribosomal particles and dissociates from pre-60S ribosomal particles after processing of 27SB pre-rRNA. Required for the normal formation of 18S rRNA through the processing of pre-rRNAs at sites A0, A1 and A2, and the normal formation of 25S and 5.8S rRNAs through the processing of pre-rRNAs at sites C1 and C2. The sequence is that of ATP-dependent rRNA helicase spb4 from Aspergillus fumigatus (strain ATCC MYA-4609 / CBS 101355 / FGSC A1100 / Af293) (Neosartorya fumigata).